A 468-amino-acid chain; its full sequence is Protein NEN1 (468 aa).

The Exonuclease domain maps to 11 to 172 (FFDVETTVPK…DDVRMNLEVL (162 aa)). Residues Asp-13 and Glu-15 each contribute to the Mg(2+) site. His-159 acts as the Proton donor/acceptor in catalysis. Asp-164 contacts Mg(2+).

The cofactor is Mg(2+). In terms of tissue distribution, expressed in the sieve elements and phloem pole pericycle cells.

The protein localises to the cytoplasm. The protein resides in the nucleus. Functionally, probable exonuclease involved in enuclation of sieve elements. In Arabidopsis thaliana (Mouse-ear cress), this protein is Protein NEN1.